Reading from the N-terminus, the 28-residue chain is Chassatide C12 (28 aa).

The cyclopeptide (Glu-Asn) cross-link spans 1–28; the sequence is EYCGESCYLIPCFTPGCYCVSRQCVNKN. Intrachain disulfides connect cysteine 3-cysteine 17, cysteine 7-cysteine 19, and cysteine 12-cysteine 24.

Post-translationally, this is a cyclic peptide. Expressed in fruit, pedicel, leaf and stem but not in root (at protein level).

In terms of biological role, probably participates in a plant defense mechanism. In Chassalia chartacea (Chassalia curviflora), this protein is Chassatide C12.